The sequence spans 141 residues: uncharacterized protein (141 aa).

The tract at residues 1-101 (FRGRAPRPLV…PDPGRSRRAT (101 aa)) is disordered. The segment covering 27 to 70 (QVRDCGREGDLRAGKAADRRLPRARETCSRFGEGVRQKDVHKGP) has biased composition (basic and acidic residues).

This is an uncharacterized protein from Dhori virus (strain Indian/1313/61) (Dho).